A 259-amino-acid chain; its full sequence is Undecaprenyl-diphosphatase 4 (259 aa).

Helical transmembrane passes span 1–21, 39–59, 71–91, 99–119, 133–153, 173–193, 208–228, and 239–259; these read MNWL…FLPI, AGLF…FIYY, FSKL…IGLL, ISKT…FLYM, ITYK…FPAI, AAYF…ILQF, SLIV…SWMI, and FAYY…THVF.

It belongs to the UppP family.

It localises to the cell membrane. It catalyses the reaction di-trans,octa-cis-undecaprenyl diphosphate + H2O = di-trans,octa-cis-undecaprenyl phosphate + phosphate + H(+). Functionally, catalyzes the dephosphorylation of undecaprenyl diphosphate (UPP). Confers resistance to bacitracin. In Bacillus thuringiensis (strain Al Hakam), this protein is Undecaprenyl-diphosphatase 4.